A 447-amino-acid polypeptide reads, in one-letter code: Rab GDP dissociation inhibitor alpha (447 aa).

S427 is modified (phosphoserine).

It belongs to the Rab GDI family. Interacts with RHOH. Interacts with the non-phosphorylated forms of RAB1A, RAB3A, RAB5A, RAB5B, RAB5C, RAB8A, RAB8B, RAB10, RAB12, RAB35, and RAB43. In terms of tissue distribution, high expression in brain, lower in other tissues.

Its subcellular location is the cytoplasm. It is found in the golgi apparatus. It localises to the trans-Golgi network. In terms of biological role, regulates the GDP/GTP exchange reaction of most Rab proteins by inhibiting the dissociation of GDP from them, and the subsequent binding of GTP to them. Promotes the dissociation of GDP-bound Rab proteins from the membrane and inhibits their activation. Promotes the dissociation of RAB1A, RAB3A, RAB5A and RAB10 from membranes. This is Rab GDP dissociation inhibitor alpha (Gdi1) from Rattus norvegicus (Rat).